Reading from the N-terminus, the 589-residue chain is C-type lectin domain family 4 member F (589 aa).

Residues 1–39 (MDGEAVRFCTDNQCVSLHPQEVDSVAMAPAAPKIPRLVQ) lie on the Cytoplasmic side of the membrane. The chain crosses the membrane as a helical; Signal-anchor for type II membrane protein span at residues 40–60 (ATPAFMAVTLVFSLVTLFVVV). The Extracellular portion of the chain corresponds to 61-589 (QQQTRPVPKP…TPPCPWILSN (529 aa)). N-linked (GlcNAc...) asparagine glycosylation is found at asparagine 79, asparagine 113, asparagine 207, asparagine 230, asparagine 244, asparagine 312, asparagine 385, and asparagine 399. In terms of domain architecture, C-type lectin spans 476–589 (NGGSLYYFSS…TPPCPWILSN (114 aa)).

It localises to the membrane. Receptor with an affinity for galactose and fucose. Could be involved in endocytosis. The polypeptide is C-type lectin domain family 4 member F (CLEC4F) (Homo sapiens (Human)).